Consider the following 196-residue polypeptide: Carnitine operon protein CaiE (196 aa).

Residues 173-196 are disordered; that stretch reads TQPLRQMEENRPRLQGTTDVTPKR. A compositionally biased stretch (polar residues) spans 187-196; sequence QGTTDVTPKR.

Belongs to the transferase hexapeptide repeat family.

Its pathway is amine and polyamine metabolism; carnitine metabolism. Overproduction of CaiE stimulates the activity of CaiB and CaiD. This is Carnitine operon protein CaiE from Shigella dysenteriae serotype 1 (strain Sd197).